The following is a 336-amino-acid chain: UDP-N-acetylglucosamine--N-acetylmuramyl-(pentapeptide) pyrophosphoryl-undecaprenol N-acetylglucosamine transferase (336 aa).

Residues 10-12 (TGG), N124, R157, S179, and Q277 each bind UDP-N-acetyl-alpha-D-glucosamine.

This sequence belongs to the glycosyltransferase 28 family. MurG subfamily.

It localises to the cell inner membrane. It catalyses the reaction di-trans,octa-cis-undecaprenyl diphospho-N-acetyl-alpha-D-muramoyl-L-alanyl-D-glutamyl-meso-2,6-diaminopimeloyl-D-alanyl-D-alanine + UDP-N-acetyl-alpha-D-glucosamine = di-trans,octa-cis-undecaprenyl diphospho-[N-acetyl-alpha-D-glucosaminyl-(1-&gt;4)]-N-acetyl-alpha-D-muramoyl-L-alanyl-D-glutamyl-meso-2,6-diaminopimeloyl-D-alanyl-D-alanine + UDP + H(+). It participates in cell wall biogenesis; peptidoglycan biosynthesis. Its function is as follows. Cell wall formation. Catalyzes the transfer of a GlcNAc subunit on undecaprenyl-pyrophosphoryl-MurNAc-pentapeptide (lipid intermediate I) to form undecaprenyl-pyrophosphoryl-MurNAc-(pentapeptide)GlcNAc (lipid intermediate II). The polypeptide is UDP-N-acetylglucosamine--N-acetylmuramyl-(pentapeptide) pyrophosphoryl-undecaprenol N-acetylglucosamine transferase (Wolinella succinogenes (strain ATCC 29543 / DSM 1740 / CCUG 13145 / JCM 31913 / LMG 7466 / NCTC 11488 / FDC 602W) (Vibrio succinogenes)).